A 281-amino-acid polypeptide reads, in one-letter code: MDLILLLKAVILGVVEGLTEFLPISSTGHLILVGDLLDFNDDRGKAFEVIIQFGAILAVCWEFREKLIKVTSSFASSPNARRFVLNLFIASIPAMGLGFLFGKHIKAVLFSPIPVASAFIVGTLIIFWAERRQQNLVDVSSYIKSVDDLRPLDALKVGLAQCAALIPGTSRSGATIIGGMLFGLPRAVATEFSFFLAIPVIGGATAYELLKLWKAPVAFSGEFTLAIVVGFIAAFISAFVCVRWLIHYVAHHNFIPFAWYRIAFGILVLFTSYTGLIAWSH.

7 helical membrane-spanning segments follow: residues 4–24, 46–63, 83–103, 108–128, 187–207, 222–242, and 257–277; these read ILLL…FLPI, AFEV…CWEF, FVLN…LFGK, VLFS…IIFW, AVAT…ATAY, EFTL…FVCV, and FAWY…TGLI.

Belongs to the UppP family.

It is found in the cell inner membrane. The catalysed reaction is di-trans,octa-cis-undecaprenyl diphosphate + H2O = di-trans,octa-cis-undecaprenyl phosphate + phosphate + H(+). Catalyzes the dephosphorylation of undecaprenyl diphosphate (UPP). Confers resistance to bacitracin. The polypeptide is Undecaprenyl-diphosphatase (Polynucleobacter necessarius subsp. necessarius (strain STIR1)).